Consider the following 414-residue polypeptide: Snake venom metalloproteinase atrolysin-D (414 aa).

An N-terminal signal peptide occupies residues 1-20 (MIEVLLVTICLAVFPYQGSS). Residues 21–190 (IILESGNVND…KASDLNLNPD (170 aa)) constitute a propeptide that is removed on maturation. Pyrrolidone carboxylic acid is present on glutamine 191. Positions 197–393 (RYIELVVVAD…YKPQCILNKP (197 aa)) constitute a Peptidase M12B domain. The Ca(2+) site is built by glutamate 200 and aspartate 284. 2 disulfides stabilise this stretch: cysteine 308/cysteine 388 and cysteine 348/cysteine 355. Zn(2+) is bound at residue histidine 333. Glutamate 334 is an active-site residue. 2 residues coordinate Zn(2+): histidine 337 and histidine 343. 2 residues coordinate Ca(2+): cysteine 388 and asparagine 391. The propeptide occupies 394-414 (LRIDPVSTPVSGNELLEAGEE).

Belongs to the venom metalloproteinase (M12B) family. P-I subfamily. Monomer. It depends on Zn(2+) as a cofactor. The N-terminus is blocked. In terms of tissue distribution, expressed by the venom gland.

Its subcellular location is the secreted. The catalysed reaction is Cleavage of 5-His-|-Leu-6, 10-His-|-Leu-11, 14-Ala-|-Leu-15, 16-Tyr-|-Leu-17 and 23-Gly-|-Phe-24 of insulin B chain. With small molecule substrates prefers hydrophobic residue at P2' and small residue such as Ala, Gly at P1.. Functionally, snake venom zinc metalloproteinase that causes hemorrhage by provoking the degradation of the sub-endothelial matrix proteins (fibronectin, laminin, type IV collagen, nidogen, and gelatins). In Crotalus atrox (Western diamondback rattlesnake), this protein is Snake venom metalloproteinase atrolysin-D.